A 492-amino-acid polypeptide reads, in one-letter code: Phosphatidylinositol-glycan biosynthesis class W protein (492 aa).

The next 5 helical transmembrane spans lie at 26–46, 59–79, 82–102, 127–147, and 156–176; these read FILT…ATFF, FILE…FTEL, FLIV…QKNV, YRAF…FQVF, and TYGI…GALV. The interval 185–216 is disordered; it reads IEKQQKKKREEEEDDNDKINKTSSSSSSSSSA. Residue Asn-204 is glycosylated (N-linked (GlcNAc...) asparagine). Positions 205-216 are enriched in low complexity; that stretch reads KTSSSSSSSSSA. Residues 264–284 traverse the membrane as a helical segment; the sequence is YGLHWNFFFTLGFVSISLAFL. An N-linked (GlcNAc...) asparagine glycan is attached at Asn-289. Helical transmembrane passes span 290–310, 331–351, 364–384, and 399–419; these read ISAI…NSFG, ICSF…GTEL, FATK…LCEI, and VLAI…ITLI. The N-linked (GlcNAc...) asparagine glycan is linked to Asn-424. Helical transmembrane passes span 437–457 and 464–484; these read LFIF…MKTI and SMII…ILDY.

This sequence belongs to the PIGW family.

Its subcellular location is the endoplasmic reticulum membrane. It participates in glycolipid biosynthesis; glycosylphosphatidylinositol-anchor biosynthesis. Its function is as follows. Probable acetyltransferase, which acetylates the inositol ring of phosphatidylinositol during biosynthesis of GPI-anchor. This chain is Phosphatidylinositol-glycan biosynthesis class W protein, found in Dictyostelium discoideum (Social amoeba).